The primary structure comprises 907 residues: GPMGIMGPRRGPPGPPGKAGEDGHPGKPGRERGVVGPQGARGFPGTPGIPGFKGIRGHNGIDGIKGQPGAPGVKGEPGAPGENGTPGQAGARGIPGERGRVGAPGPAGARGSDGSVGPVGPAGPIGSAGPPGFPGAPGPKGEIGPVGNPGPAGPAGPRGEVGIPGVSGPVGPPGNPGANGIPGAKGAAGIPGVAGAPGIPGPRGIPGPVGAAGATGARGIVGEPGPAGTKGESGNKGEPGSAGPQGPPGPSGEEGKRGPNGEAGSAGPTGPPGIRGSRGIPGADGRAGVMGPPGSRGASGPAGVRGPNGDSGRPGEPGIMGPRGFPGSPGNVGPAGKEGPAGIPGIDGRPGPAGPAGARGEPGNIGFPGPKGPTGDPGKGPPGFQGIPGPAGTAGEAGKPGERGIPGEFGIPGPAGARGERGPPGESGAAGPAGPIGSRGPSGPPGPDGAKGEPGVVGAPGTAGPSGPSGIPGERGAAGIPGPKGEKGETGIRGAPGAVGAPGPAGANGDRGEAGPAGPAGPAGPRGSPGERGEVGPAGPNGFAGPAGAAGQPGAKGERKGPKGENGPVGPTGPVGSAGPAGPNGPPGPAGSRGDGGPPGATGFPGAAGRTGPPGPAGITGPPGPPGAAGKEGIRGDQGPVGRAGETGASGPPGFAGEKGPNGEAGTAGAPGIPGPQGIIGAPGIIGIPGSRGERGIPGVAGSVGEPGPIGIAGPPGARGPPGAVGSPGVNGAPGEAGRDGNPGNDGPPGRGYPGNSGPVGAAGAPGSPGPVGPTGKHGNRGEPGPVGSVGPAGAVGPRGPSGPQGIRGDKGEPGDKGPRGIPGIKGHNGIQGIPGIAGQHGDQGAPGSVGPAGPRGPAGPTGPAGKDGRIGHPGSVGPAGIRGSQGSQGPAGPPGPPGPPGPPGPS.

2 disordered regions span residues 1-183 (GPMG…GIPG) and 199-907 (IPGP…PGPS). A compositionally biased stretch (basic and acidic residues) spans 19-33 (AGEDGHPGKPGRERG). Low complexity-rich tracts occupy residues 101–130 (VGAP…SAGP), 155–169 (AGPR…VSGP), and 206–221 (PGPV…RGIV). The residue at position 260 (asparagine 260) is a Deamidated asparagine. Proline 272 carries the 4-hydroxyproline modification. 8 stretches are compositionally biased toward low complexity: residues 272 to 281 (PGIRGSRGIP), 292 to 307 (PPGS…VRGP), 340 to 362 (PAGI…RGEP), 424 to 441 (PGES…SRGP), 453 to 475 (EPGV…PGER), 495 to 507 (APGA…PAGA), 535 to 555 (VGPA…QPGA), and 566 to 581 (NGPV…AGPA). Over residues 591 to 600 (GSRGDGGPPG) the composition is skewed to gly residues. Composition is skewed to low complexity over residues 601 to 611 (ATGFPGAAGRT), 664 to 691 (EAGT…IPGS), 706 to 745 (EPGP…NPGN), 756 to 766 (NSGPVGAAGAP), and 783 to 804 (EPGP…PSGP). A compositionally biased stretch (basic and acidic residues) spans 808 to 819 (RGDKGEPGDKGP). The span at 892–907 (AGPPGPPGPPGPPGPS) shows a compositional bias: pro residues.

It belongs to the fibrillar collagen family. In terms of assembly, trimers of one alpha 2(I) and two alpha 1(I) chains. Interacts (via C-terminus) with TMEM131 (via PapD-L domain); the interaction is direct and is involved in assembly and TRAPPIII ER-to-Golgi transport complex-dependent secretion of collagen. Prolines at the third position of the tripeptide repeating unit (G-X-Y) are hydroxylated in some or all of the chains. In terms of tissue distribution, forms the fibrils of tendon, ligaments and bones. In bones, the fibrils are mineralized with calcium hydroxyapatite.

The protein resides in the secreted. It is found in the extracellular space. Its subcellular location is the extracellular matrix. Its function is as follows. Type I collagen is a member of group I collagen (fibrillar forming collagen). The polypeptide is Collagen alpha-2(I) chain (Macrauchenia sp).